A 438-amino-acid polypeptide reads, in one-letter code: Envelope glycoprotein M (438 aa).

Residues 1 to 13 are Intravirion-facing; the sequence is MAGSAQPAAVHWR. Residues 14–34 traverse the membrane as a helical segment; that stretch reads LWLAQVGVFAGLALLLLITLI. The Virion surface portion of the chain corresponds to 35 to 88; sequence GAASPGAGLPCFYAAIVNYNARNLSADGGAWAQRELGARHPALFLETPTTAAFS. A helical membrane pass occupies residues 89-109; the sequence is AYTAVVLLAVAAFDVAAAIII. Topologically, residues 110–132 are intravirion; it reads RRENSGGFAAAYHMNALATLATP. Residues 133–153 form a helical membrane-spanning segment; it reads PGALLLGALAAWTLQAAVLLL. Residues 154 to 158 lie on the Virion surface side of the membrane; it reads SHKIM. A helical membrane pass occupies residues 159 to 179; the sequence is VLAAATYLAHLAPPAAFVGLF. The Intravirion segment spans residues 180–212; that stretch reads CTAGLPGAEYAQAVHALRERSPRAHRLLGPGRA. Residues 213–233 form a helical membrane-spanning segment; the sequence is VMINLAGGLLALIIGTAPLML. Residues 234–248 lie on the Virion surface side of the membrane; it reads GQLLGAGLGLSLAQT. Residues 249 to 269 traverse the membrane as a helical segment; that stretch reads VVAGVTVFCLAAVLFLVLTEL. Residues 270 to 276 lie on the Intravirion side of the membrane; that stretch reads VLSRYTQ. Residues 277–297 traverse the membrane as a helical segment; the sequence is VLPGPAFGTLVAASCIAVASH. The Virion surface portion of the chain corresponds to 298-317; sequence DYFHQLRGVVRTQAPRAAAR. A helical transmembrane segment spans residues 318–338; it reads VKLALAGVALLAVAMLVLRLV. The Intravirion segment spans residues 339 to 438; sequence RACLHHRRKG…PRSPPPAHVK (100 aa). The interval 395–438 is disordered; the sequence is EEAVYEAHAPPRPPTIPLRRPEVPHSRASHPRPPPRSPPPAHVK. Positions 425–438 are enriched in pro residues; that stretch reads PRPPPRSPPPAHVK.

Belongs to the herpesviridae glycoprotein M family. As to quaternary structure, interacts (via N-terminus) with gN (via N-terminus). The gM-gN heterodimer forms the gCII complex. Post-translationally, N-glycosylated. It is not O-glycosylated.

It localises to the virion membrane. The protein localises to the host Golgi apparatus. The protein resides in the host trans-Golgi network. It is found in the host endosome membrane. Its subcellular location is the host nucleus inner membrane. In terms of biological role, envelope glycoprotein important for virion assembly and egress. Plays a role in the correct incorporation of gH-gL into virion membrane. Directs the glycoprotein N (gN) to the host trans-Golgi network. This Bovine herpesvirus 1.1 (strain Cooper) (BoHV-1) protein is Envelope glycoprotein M.